The following is a 304-amino-acid chain: ATP synthase gamma chain (304 aa).

The protein belongs to the ATPase gamma chain family. As to quaternary structure, F-type ATPases have 2 components, CF(1) - the catalytic core - and CF(0) - the membrane proton channel. CF(1) has five subunits: alpha(3), beta(3), gamma(1), delta(1), epsilon(1). CF(0) has three main subunits: a, b and c.

The protein localises to the cell membrane. Produces ATP from ADP in the presence of a proton gradient across the membrane. The gamma chain is believed to be important in regulating ATPase activity and the flow of protons through the CF(0) complex. In Mycobacterium ulcerans (strain Agy99), this protein is ATP synthase gamma chain.